The chain runs to 539 residues: GMP synthase [glutamine-hydrolyzing] (539 aa).

A Glutamine amidotransferase type-1 domain is found at 4-202 (KILILDFGSQ…VLGIAGCKPD (199 aa)). The active-site Nucleophile is cysteine 81. Catalysis depends on residues histidine 176 and glutamate 178. In terms of domain architecture, GMPS ATP-PPase spans 203–395 (WVMRDHIEEA…LGLPPEMVYR (193 aa)). Residue 230-236 (SGGVDSS) coordinates ATP.

Homodimer.

The catalysed reaction is XMP + L-glutamine + ATP + H2O = GMP + L-glutamate + AMP + diphosphate + 2 H(+). It functions in the pathway purine metabolism; GMP biosynthesis; GMP from XMP (L-Gln route): step 1/1. Catalyzes the synthesis of GMP from XMP. This Cupriavidus necator (strain ATCC 17699 / DSM 428 / KCTC 22496 / NCIMB 10442 / H16 / Stanier 337) (Ralstonia eutropha) protein is GMP synthase [glutamine-hydrolyzing].